A 509-amino-acid chain; its full sequence is ATP synthase subunit alpha (509 aa).

169–176 (GDRQTGKT) is an ATP binding site.

It belongs to the ATPase alpha/beta chains family. F-type ATPases have 2 components, CF(1) - the catalytic core - and CF(0) - the membrane proton channel. CF(1) has five subunits: alpha(3), beta(3), gamma(1), delta(1), epsilon(1). CF(0) has three main subunits: a(1), b(2) and c(9-12). The alpha and beta chains form an alternating ring which encloses part of the gamma chain. CF(1) is attached to CF(0) by a central stalk formed by the gamma and epsilon chains, while a peripheral stalk is formed by the delta and b chains.

Its subcellular location is the cell inner membrane. It catalyses the reaction ATP + H2O + 4 H(+)(in) = ADP + phosphate + 5 H(+)(out). Functionally, produces ATP from ADP in the presence of a proton gradient across the membrane. The alpha chain is a regulatory subunit. This is ATP synthase subunit alpha from Methylocella silvestris (strain DSM 15510 / CIP 108128 / LMG 27833 / NCIMB 13906 / BL2).